Consider the following 85-residue polypeptide: UPF0291 protein SPH_1589 (85 aa).

The tract at residues 62-85 is disordered; that stretch reads TPEKLRQVQREKGLHGRSLDDPNS.

The protein belongs to the UPF0291 family.

The protein resides in the cytoplasm. This Streptococcus pneumoniae (strain Hungary19A-6) protein is UPF0291 protein SPH_1589.